A 194-amino-acid polypeptide reads, in one-letter code: Orotate phosphoribosyltransferase (194 aa).

117–125 (EDVVTTGLS) contacts 5-phospho-alpha-D-ribose 1-diphosphate. Residues Thr-121 and Arg-149 each contribute to the orotate site.

Belongs to the purine/pyrimidine phosphoribosyltransferase family. PyrE subfamily. In terms of assembly, homodimer. Mg(2+) serves as cofactor.

It carries out the reaction orotidine 5'-phosphate + diphosphate = orotate + 5-phospho-alpha-D-ribose 1-diphosphate. Its pathway is pyrimidine metabolism; UMP biosynthesis via de novo pathway; UMP from orotate: step 1/2. Its function is as follows. Catalyzes the transfer of a ribosyl phosphate group from 5-phosphoribose 1-diphosphate to orotate, leading to the formation of orotidine monophosphate (OMP). This is Orotate phosphoribosyltransferase from Novosphingobium aromaticivorans (strain ATCC 700278 / DSM 12444 / CCUG 56034 / CIP 105152 / NBRC 16084 / F199).